Consider the following 264-residue polypeptide: Thymidylate synthase (264 aa).

Residue Arg-21 participates in dUMP binding. Residue His-51 participates in (6R)-5,10-methylene-5,6,7,8-tetrahydrofolate binding. A dUMP-binding site is contributed by 126–127 (RR). The active-site Nucleophile is the Cys-146. DUMP is bound by residues 166–169 (RSVD), Asn-177, and 207–209 (HLY). Asp-169 serves as a coordination point for (6R)-5,10-methylene-5,6,7,8-tetrahydrofolate. A (6R)-5,10-methylene-5,6,7,8-tetrahydrofolate-binding site is contributed by Ala-263.

The protein belongs to the thymidylate synthase family. Bacterial-type ThyA subfamily. Homodimer.

It is found in the cytoplasm. The catalysed reaction is dUMP + (6R)-5,10-methylene-5,6,7,8-tetrahydrofolate = 7,8-dihydrofolate + dTMP. It functions in the pathway pyrimidine metabolism; dTTP biosynthesis. In terms of biological role, catalyzes the reductive methylation of 2'-deoxyuridine-5'-monophosphate (dUMP) to 2'-deoxythymidine-5'-monophosphate (dTMP) while utilizing 5,10-methylenetetrahydrofolate (mTHF) as the methyl donor and reductant in the reaction, yielding dihydrofolate (DHF) as a by-product. This enzymatic reaction provides an intracellular de novo source of dTMP, an essential precursor for DNA biosynthesis. This Geobacillus sp. (strain WCH70) protein is Thymidylate synthase.